The primary structure comprises 160 residues: ATP synthase subunit b (160 aa).

The chain crosses the membrane as a helical span at residues Ile5 to Trp27.

Belongs to the ATPase B chain family. In terms of assembly, F-type ATPases have 2 components, F(1) - the catalytic core - and F(0) - the membrane proton channel. F(1) has five subunits: alpha(3), beta(3), gamma(1), delta(1), epsilon(1). F(0) has three main subunits: a(1), b(2) and c(10-14). The alpha and beta chains form an alternating ring which encloses part of the gamma chain. F(1) is attached to F(0) by a central stalk formed by the gamma and epsilon chains, while a peripheral stalk is formed by the delta and b chains.

Its subcellular location is the cell inner membrane. Functionally, f(1)F(0) ATP synthase produces ATP from ADP in the presence of a proton or sodium gradient. F-type ATPases consist of two structural domains, F(1) containing the extramembraneous catalytic core and F(0) containing the membrane proton channel, linked together by a central stalk and a peripheral stalk. During catalysis, ATP synthesis in the catalytic domain of F(1) is coupled via a rotary mechanism of the central stalk subunits to proton translocation. Its function is as follows. Component of the F(0) channel, it forms part of the peripheral stalk, linking F(1) to F(0). This is ATP synthase subunit b from Protochlamydia amoebophila (strain UWE25).